A 121-amino-acid polypeptide reads, in one-letter code: Ribosome-binding factor A (121 aa).

This sequence belongs to the RbfA family. As to quaternary structure, monomer. Binds 30S ribosomal subunits, but not 50S ribosomal subunits or 70S ribosomes.

It localises to the cytoplasm. In terms of biological role, one of several proteins that assist in the late maturation steps of the functional core of the 30S ribosomal subunit. Associates with free 30S ribosomal subunits (but not with 30S subunits that are part of 70S ribosomes or polysomes). Required for efficient processing of 16S rRNA. May interact with the 5'-terminal helix region of 16S rRNA. This chain is Ribosome-binding factor A, found in Lactobacillus acidophilus (strain ATCC 700396 / NCK56 / N2 / NCFM).